A 434-amino-acid chain; its full sequence is Beta-glucuronosyltransferase GlcAT14B (434 aa).

Residues M1 to K21 lie on the Cytoplasmic side of the membrane. The signal-anchor for type II membrane protein transmembrane segment at W22–L42 threads the bilayer. Topologically, residues A43–R434 are lumenal. N-linked (GlcNAc...) asparagine glycans are attached at residues N138, N187, N316, and N392.

The protein belongs to the glycosyltransferase 14 family.

The protein resides in the golgi apparatus membrane. In terms of biological role, beta-glucuronosyltransferase involved in the biosynthesis of type II arabinogalactan (AG). Modifies both the beta-1,6-linked galactan and beta-1,3-linked galactan present in type II AG. The polypeptide is Beta-glucuronosyltransferase GlcAT14B (Arabidopsis thaliana (Mouse-ear cress)).